Consider the following 400-residue polypeptide: Diphosphomevalonate decarboxylase (400 aa).

The residue at position 2 (Ala-2) is an N-acetylalanine. Residues 23–26, Arg-78, 156–161, and Thr-212 contribute to the (R)-5-diphosphomevalonate site; these read YWGK and SGSACR.

This sequence belongs to the diphosphomevalonate decarboxylase family. Homodimer.

The protein resides in the cytoplasm. It carries out the reaction (R)-5-diphosphomevalonate + ATP = isopentenyl diphosphate + ADP + phosphate + CO2. It functions in the pathway steroid biosynthesis; cholesterol biosynthesis. In terms of biological role, catalyzes the ATP dependent decarboxylation of (R)-5-diphosphomevalonate to form isopentenyl diphosphate (IPP). Functions in the mevalonate (MVA) pathway leading to isopentenyl diphosphate (IPP), a key precursor for the biosynthesis of isoprenoids and sterol synthesis. This chain is Diphosphomevalonate decarboxylase (MVD), found in Bos taurus (Bovine).